An 87-amino-acid polypeptide reads, in one-letter code: UPF0367 protein P9303_26451 (87 aa).

It belongs to the UPF0367 family.

The chain is UPF0367 protein P9303_26451 from Prochlorococcus marinus (strain MIT 9303).